The primary structure comprises 392 residues: Bone morphogenetic protein 15 (392 aa).

Residues 1 to 25 (MALLTILRILLWGVVLFMEQRVQMA) form the signal peptide. A propeptide spanning residues 26–267 (KPGWPSTALL…ESSFLMRSVR (242 aa)) is cleaved from the precursor. N-linked (GlcNAc...) asparagine glycosylation is found at asparagine 85, asparagine 213, asparagine 236, asparagine 349, and asparagine 373. 3 cysteine pairs are disulfide-bonded: cysteine 291/cysteine 357, cysteine 320/cysteine 389, and cysteine 324/cysteine 391.

Belongs to the TGF-beta family. Homodimer. But, in contrast to other members of this family, cannot be disulfide-linked. In terms of tissue distribution, ovary specific.

The protein resides in the secreted. Its function is as follows. May be involved in follicular development. Oocyte-specific growth/differentiation factor that stimulates folliculogenesis and granulosa cell (GC) growth. The sequence is that of Bone morphogenetic protein 15 (Bmp15) from Mus musculus (Mouse).